We begin with the raw amino-acid sequence, 125 residues long: Ribosome-binding factor A (125 aa).

This sequence belongs to the RbfA family. In terms of assembly, monomer. Binds 30S ribosomal subunits, but not 50S ribosomal subunits or 70S ribosomes.

Its subcellular location is the cytoplasm. Its function is as follows. One of several proteins that assist in the late maturation steps of the functional core of the 30S ribosomal subunit. Associates with free 30S ribosomal subunits (but not with 30S subunits that are part of 70S ribosomes or polysomes). Required for efficient processing of 16S rRNA. May interact with the 5'-terminal helix region of 16S rRNA. This chain is Ribosome-binding factor A, found in Wigglesworthia glossinidia brevipalpis.